Consider the following 207-residue polypeptide: Small ribosomal subunit protein uS4 (207 aa).

The interval 31 to 51 is disordered; that stretch reads KCKLDSKPGQHGRTSGARTSD. Residues 97-162 form the S4 RNA-binding domain; it reads SRLDNVVYRM…QGRIRESLDL (66 aa).

It belongs to the universal ribosomal protein uS4 family. In terms of assembly, part of the 30S ribosomal subunit. Contacts protein S5. The interaction surface between S4 and S5 is involved in control of translational fidelity.

One of the primary rRNA binding proteins, it binds directly to 16S rRNA where it nucleates assembly of the body of the 30S subunit. Its function is as follows. With S5 and S12 plays an important role in translational accuracy. The protein is Small ribosomal subunit protein uS4 of Bordetella bronchiseptica (strain ATCC BAA-588 / NCTC 13252 / RB50) (Alcaligenes bronchisepticus).